The primary structure comprises 207 residues: A-type ATP synthase subunit E (207 aa).

Belongs to the V-ATPase E subunit family. Has multiple subunits with at least A(3), B(3), C, D, E, F, H, I and proteolipid K(x).

It localises to the cell membrane. In terms of biological role, component of the A-type ATP synthase that produces ATP from ADP in the presence of a proton gradient across the membrane. This is A-type ATP synthase subunit E from Hyperthermus butylicus (strain DSM 5456 / JCM 9403 / PLM1-5).